Here is a 565-residue protein sequence, read N- to C-terminus: NAD-dependent malic enzyme (565 aa).

Tyr-104 functions as the Proton donor in the catalytic mechanism. Arg-157 contributes to the NAD(+) binding site. The Proton acceptor role is filled by Lys-175. Residues Glu-246, Asp-247, and Asp-270 each coordinate a divalent metal cation. Asp-270 and Asn-418 together coordinate NAD(+).

This sequence belongs to the malic enzymes family. As to quaternary structure, homotetramer. Mg(2+) serves as cofactor. Mn(2+) is required as a cofactor.

It catalyses the reaction (S)-malate + NAD(+) = pyruvate + CO2 + NADH. It carries out the reaction oxaloacetate + H(+) = pyruvate + CO2. This Enterobacter sp. (strain 638) protein is NAD-dependent malic enzyme.